Consider the following 752-residue polypeptide: Microtubule-associated protein tau (752 aa).

The disordered stretch occupies residues 1-567 (MAEPRQEFDT…PVPMPDLKNV (567 aa)). A2 carries the N-acetylalanine modification. Y18 bears the Phosphotyrosine mark. K33 participates in a covalent cross-link: Glycyl lysine isopeptide (Lys-Gly) (interchain with G-Cter in ubiquitin). Residues S35 and S50 each carry the phosphoserine modification. Positions 50 to 60 (SETSDAKSTPT) are enriched in polar residues. Phosphothreonine is present on residues T58, T60, and T100. Over residues 142 to 151 (SDWTHQQVPS) the composition is skewed to polar residues. Residues 173–182 (RPEDVERSHP) are compositionally biased toward basic and acidic residues. A phosphoserine mark is found at S191 and S204. Over residues 192 to 204 (PQKEAWGKDRLGS) the composition is skewed to basic and acidic residues. The span at 205-218 (EEEVDEDITMDESS) shows a compositional bias: acidic residues. Residues 219 to 229 (QESPPSQASLA) show a composition bias toward low complexity. Residues 233-252 (ATPQARSVSASGVSGETTSI) are compositionally biased toward polar residues. Composition is skewed to basic and acidic residues over residues 289–313 (EEGH…KEQD) and 374–385 (SKDRTGNDEKKA). Polar residues-rich tracts occupy residues 387–400 (TSTP…SNRP) and 432–446 (KYVS…SPGT). Position 464 is a phosphothreonine (T464). R466 is subject to Omega-N-methylarginine. K474 carries the post-translational modification N6,N6-dimethyllysine; alternate. K474 is subject to N6-acetyllysine; alternate. Residues T480, T486, and T487 each carry the phosphothreonine modification. The residue at position 489 (S489) is a Phosphoserine. T492 carries the phosphothreonine modification. Residues S496, S502, and S506 each carry the phosphoserine modification. Residues 498 to 525 (EPPKSGERSGYSSPGSPGTPGSRSRTPS) show a composition bias toward low complexity. Y508 is subject to Phosphotyrosine. 2 positions are modified to phosphoserine: S509 and S510. Phosphoserine; by CK1, PDPK1 and TTBK1 is present on S513. T516 and T523 each carry phosphothreonine. At S525 the chain carries Phosphoserine. The residue at position 528 (T528) is a Phosphothreonine. K536 carries the N6-acetyllysine modification. The residue at position 542 (T542) is a Phosphothreonine. Residues S546 and S548 each carry the phosphoserine modification. Tau/MAP repeat units follow at residues 555 to 585 (QTAP…GGGK), 586 to 616 (VQII…GGGS), 617 to 647 (VHIV…GGGQ), and 648 to 679 (VEVK…GGGN). A Glycyl lysine isopeptide (Lys-Gly) (interchain with G-Cter in ubiquitin) cross-link involves residue K565. N6-acetyllysine; alternate is present on K570. K570 is modified (N6-methyllysine; alternate). K570 participates in a covalent cross-link: Glycyl lysine isopeptide (Lys-Gly) (interchain with G-Cter in ubiquitin); alternate. At S573 the chain carries Phosphoserine. A Glycyl lysine isopeptide (Lys-Gly) (interchain with G-Cter in ubiquitin) cross-link involves residue K578. Position 592 is an N6-acetyllysine; alternate (K592). K592 is covalently cross-linked (Glycyl lysine isopeptide (Lys-Gly) (interchain with G-Cter in ubiquitin); alternate). Phosphoserine occurs at positions 596 and 600. At K601 the chain carries N6-acetyllysine. C602 and C633 form a disulfide bridge. Position 604 is a phosphoserine (S604). K609 is subject to N6-acetyllysine; alternate. Residue K609 forms a Glycyl lysine isopeptide (Lys-Gly) (interchain with G-Cter in ubiquitin); alternate linkage. S616 bears the Phosphoserine mark. K622 carries the N6,N6-dimethyllysine; alternate modification. 3 positions are modified to N6-acetyllysine; alternate: K622, K628, and K632. Residues K622, K628, and K632 each participate in a glycyl lysine isopeptide (Lys-Gly) (interchain with G-Cter in ubiquitin); alternate cross-link. S635 carries the phosphoserine modification. 3 positions are modified to N6-acetyllysine; alternate: K642, K654, and K658. Glycyl lysine isopeptide (Lys-Gly) (interchain with G-Cter in ubiquitin); alternate cross-links involve residues K642, K654, and K658. R660 is modified (omega-N-methylarginine). S663 carries the phosphoserine modification. A Glycyl lysine isopeptide (Lys-Gly) (interchain with G-Cter in ubiquitin) cross-link involves residue K664. The residue at position 667 (S667) is a Phosphoserine. The residue at position 680 (K680) is an N6-acetyllysine; alternate. K680 participates in a covalent cross-link: Glycyl lysine isopeptide (Lys-Gly) (interchain with G-Cter in ubiquitin); alternate. K686 participates in a covalent cross-link: Glycyl lysine isopeptide (Lys-Gly) (interchain with G-Cter in ubiquitin). K696 bears the N6-acetyllysine; alternate mark. K696 is covalently cross-linked (Glycyl lysine isopeptide (Lys-Gly) (interchain with G-Cter in ubiquitin); alternate). Y705 carries the phosphotyrosine modification. At S707 the chain carries Phosphoserine; by CK1 and PDPK1. Residue S711 is modified to Phosphoserine. T714 is modified (phosphothreonine). The residue at position 715 (S715) is a Phosphoserine; by CK1 and PDPK1. Residues S720, S727, and S733 each carry the phosphoserine modification. Residue T738 is modified to Phosphothreonine.

In terms of assembly, interacts with MARK1, MARK2, MARK3 and MARK4. Interacts with SQSTM1 when polyubiquitinated. Interacts with PSMC2 through SQSTM1. Interacts with FKBP4. Binds to CSNK1D. Interacts with SGK1. Interacts with EPM2A; the interaction dephosphorylates MAPT at Ser-388. Interacts with PIN1. Interacts with LRRK2. Interacts with LRP1, leading to endocytosis; this interaction is reduced in the presence of LRPAP1/RAP. Polyubiquitinated. Requires functional TRAF6 and may provoke SQSTM1-dependent degradation by the proteasome. Post-translationally, phosphorylated at various serine and threonine residues in S-P or T-P motifs by proline-directed protein kinases (PDPK1, CDK1, CDK5, GSK3, MAPK) (a few sites per protein in interphase, more in mitosis), and at serine residues in K-X-G-S motifs by MAP/microtubule affinity-regulating kinase (MARK1, MARK2, MARK3, MARK4), causing detachment from microtubules, and their disassembly. Fetal Tau is much more phosphorylated than adult Tau. Phosphorylation at Ser-573 by BRSK1 and BRSK2 in neurons affects ability to bind microtubules and plays a role in neuron polarization. Phosphorylated by PHK. Dephosphorylation at several serine and threonine residues by the serine/threonine phosphatase PPP5C. Phosphorylation at Ser-204 by SGK1 mediates microtubule depolymerization and neurite formation in hippocampal neurons. In terms of tissue distribution, expressed in neurons. The larger forms (isoform tau-A and isoform tau-B) are preferentially expressed in the peripheral nervous system while the other are expressed in the central nervous system. Low amounts of the larger forms are also found in limited areas of the CNS.

It localises to the cytoplasm. It is found in the cytosol. The protein localises to the cell membrane. Its subcellular location is the cytoskeleton. The protein resides in the cell projection. It localises to the axon. It is found in the dendrite. The protein localises to the secreted. Functionally, promotes microtubule assembly and stability, and might be involved in the establishment and maintenance of neuronal polarity. The C-terminus binds axonal microtubules while the N-terminus binds neural plasma membrane components, suggesting that tau functions as a linker protein between both. Axonal polarity is predetermined by tau localization (in the neuronal cell) in the domain of the cell body defined by the centrosome. The short isoforms allow plasticity of the cytoskeleton whereas the longer isoforms may preferentially play a role in its stabilization. This is Microtubule-associated protein tau from Rattus norvegicus (Rat).